Consider the following 133-residue polypeptide: Vesicle transport protein GOT1A (133 aa).

Residues 1 to 9 (MISITEWQK) are Cytoplasmic-facing. A helical transmembrane segment spans residues 10-30 (IGVGITGFGVFFILFGILLYF). D31 is a topological domain (lumenal). A helical membrane pass occupies residues 32–52 (SVLLAFGNLLFLTGLSLIIGL). Residues 53–68 (RRTFAFFFQRHKLKGT) lie on the Cytoplasmic side of the membrane. A helical membrane pass occupies residues 69 to 89 (SFFLGGVAIVLLRWPLLGMLL). Residues 90 to 92 (EAY) are Lumenal-facing. A helical membrane pass occupies residues 93–113 (GFISLFKGFFPVVFGFLGSAF). The Cytoplasmic portion of the chain corresponds to 114 to 133 (NIPFLSTLFQKLQGSSSSMV).

It belongs to the GOT1 family.

It is found in the golgi apparatus membrane. Functionally, may be involved in fusion of ER-derived transport vesicles with the Golgi complex. The protein is Vesicle transport protein GOT1A of Mus musculus (Mouse).